A 211-amino-acid chain; its full sequence is FMN-dependent NADH:quinone oxidoreductase (211 aa).

FMN-binding positions include Ser10, 16-18 (STS), and 138-141 (TQGG).

Belongs to the azoreductase type 1 family. Homodimer. FMN serves as cofactor.

It catalyses the reaction 2 a quinone + NADH + H(+) = 2 a 1,4-benzosemiquinone + NAD(+). It carries out the reaction N,N-dimethyl-1,4-phenylenediamine + anthranilate + 2 NAD(+) = 2-(4-dimethylaminophenyl)diazenylbenzoate + 2 NADH + 2 H(+). Quinone reductase that provides resistance to thiol-specific stress caused by electrophilic quinones. In terms of biological role, also exhibits azoreductase activity. Catalyzes the reductive cleavage of the azo bond in aromatic azo compounds to the corresponding amines. The polypeptide is FMN-dependent NADH:quinone oxidoreductase (Frankia alni (strain DSM 45986 / CECT 9034 / ACN14a)).